The chain runs to 72 residues: Dermaseptin AA-3-4 (72 aa).

Residues 1–22 (MAFLKKSLFLVLFLGLVSLSIC) form the signal peptide. A propeptide spanning residues 23 to 43 (DEEKRENEDEEEQEDDEQSEE) is cleaved from the precursor. The interval 24 to 45 (EEKRENEDEEEQEDDEQSEEKR) is disordered. The span at 30–41 (EDEEEQEDDEQS) shows a compositional bias: acidic residues.

It belongs to the frog skin active peptide (FSAP) family. In terms of tissue distribution, expressed by the skin glands.

The protein localises to the secreted. In terms of biological role, possesses a potent antimicrobial activity against Gram-positive and Gram-negative bacteria. Probably acts by disturbing membrane functions with its amphipathic structure. The polypeptide is Dermaseptin AA-3-4 (Agalychnis annae (Blue-sided leaf frog)).